We begin with the raw amino-acid sequence, 720 residues long: Putative fatty acid oxidation complex trifunctional enzyme (720 aa).

The tract at residues 1–384 (MQNEIKKVCV…SWHYGPFELL (384 aa)) is 3-hydroxyacyl-CoA dehydrogenase. The segment at 453–720 (FVITTKMNSL…TIEKLQAIVG (268 aa)) is enoyl-CoA hydratase/isomerase.

The protein in the N-terminal section; belongs to the 3-hydroxyacyl-CoA dehydrogenase family. In the C-terminal section; belongs to the enoyl-CoA hydratase/isomerase family.

The enzyme catalyses a (3S)-3-hydroxyacyl-CoA + NAD(+) = a 3-oxoacyl-CoA + NADH + H(+). The catalysed reaction is a (3S)-3-hydroxyacyl-CoA = a (2E)-enoyl-CoA + H2O. It carries out the reaction a 4-saturated-(3S)-3-hydroxyacyl-CoA = a (3E)-enoyl-CoA + H2O. It catalyses the reaction a (3Z)-enoyl-CoA = a 4-saturated (2E)-enoyl-CoA. The enzyme catalyses a (3E)-enoyl-CoA = a 4-saturated (2E)-enoyl-CoA. This Rickettsia prowazekii (strain Madrid E) protein is Putative fatty acid oxidation complex trifunctional enzyme.